A 156-amino-acid polypeptide reads, in one-letter code: DNA gyrase inhibitor (156 aa).

It belongs to the DNA gyrase inhibitor family. In terms of assembly, interacts with DNA gyrase.

It localises to the cytoplasm. Its function is as follows. Inhibits the supercoiling activity of DNA gyrase. Acts by inhibiting DNA gyrase at an early step, prior to (or at the step of) binding of DNA by the gyrase. It protects cells against toxins that target DNA gyrase, by inhibiting activity of these toxins and reducing the formation of lethal double-strand breaks in the cell. The protein is DNA gyrase inhibitor of Serratia proteamaculans (strain 568).